The chain runs to 66 residues: Sodium channel neurotoxin MeuNaTxalpha-7 (66 aa).

The 63-residue stretch at 2–64 (RDGYIADDKN…VPIKVSGKCN (63 aa)) folds into the LCN-type CS-alpha/beta domain. 4 cysteine pairs are disulfide-bonded: cysteine 12–cysteine 63, cysteine 16–cysteine 36, cysteine 22–cysteine 46, and cysteine 26–cysteine 48. Residue asparagine 64 is modified to Asparagine amide.

Belongs to the long (4 C-C) scorpion toxin superfamily. Sodium channel inhibitor family. Alpha subfamily. As to expression, expressed by the venom gland.

It is found in the secreted. Functionally, alpha toxins bind voltage-independently at site-3 of sodium channels (Nav) and inhibit the inactivation of the activated channels, thereby blocking neuronal transmission. This Mesobuthus eupeus (Lesser Asian scorpion) protein is Sodium channel neurotoxin MeuNaTxalpha-7.